The sequence spans 423 residues: MSEPQRLKPVFPQDPKWPGEGSSRVPFWAYTREDLYKRELERLFYANHWCYVGLEAEIPNPGDFKRTVIGERSVIMVRDPDGGINVVENVCAHRGMRFCRERHGNAKDFFCPYHQWNYSLKGDLQGVPFRRGVKQDGKVNGGMPKDFKLEEHGLTKLKVAARGGAVFASFDHDVEPFEEFLGPTILHYFDRVFNGRKLKILGYRRQRIPGNWKLMQENIKDPYHPGLLHTWFSTFGLWRADNKSELKMDAKFRHAAMISTRGQGGKNEEVVSGVDSFKEQMKVNDPRLLDIVPEPWWGGPTAVMTTIFPSVIIQQQVNSVSTRHIQPNGHGSFDFVWTHFGFEDDNEEWTQRRLIQANLFGPAGFVSADDGEVIEWSQEGFEQKPTHRTVIEMGGHEIGDTDHMVTETLIRGMYDYWRKVMGE.

A disordered region spans residues Met1–Glu20. The region spanning Trp49–Ala168 is the Rieske domain. [2Fe-2S] cluster is bound by residues Cys91, His93, Cys111, and His114. Fe cation contacts are provided by His224, His229, and Asp370.

This sequence belongs to the bacterial ring-hydroxylating dioxygenase alpha subunit family. The salicylate 5-hydroxylase (S5H) multicomponent enzyme system is composed of an electron transfer component and an oxygenase component. The electron transfer component is comprised of a ferredoxin reductase (NagAa) and a ferredoxin (NagAb), and the oxygenase component is formed by a large subunit (NagG) and a small subunit (NagH). The cofactor is Fe cation. [2Fe-2S] cluster is required as a cofactor.

It carries out the reaction salicylate + NADH + O2 + H(+) = 2,5-dihydroxybenzoate + NAD(+) + H2O. It participates in aromatic compound metabolism; naphthalene degradation. In terms of biological role, oxygenase component of the salicylate 5-hydroxylase (S5H) multicomponent enzyme system which catalyzes the 5-hydroxylation of salicylate to gentisate. Active only on substrates with a ring-substituted carboxylate group with an adjacent hydroxyl group. Primarily active against salicylate and substituted salicylates, but not against 2-hydroxycinnamate, 3-hydroxycinnamate, 2-hydroxyphenylacetate, 3-hydroxyphenylacetate, 2-hydroxybenzophenone, 1-hydroxy-2-naphthoate, 4-methoxysalicylate or 2-hydroxyacetophenone. This Ralstonia sp protein is Salicylate 5-hydroxylase, large oxygenase component.